The sequence spans 97 residues: Co-chaperonin GroES (97 aa).

This sequence belongs to the GroES chaperonin family. In terms of assembly, heptamer of 7 subunits arranged in a ring. Interacts with the chaperonin GroEL.

It localises to the cytoplasm. In terms of biological role, together with the chaperonin GroEL, plays an essential role in assisting protein folding. The GroEL-GroES system forms a nano-cage that allows encapsulation of the non-native substrate proteins and provides a physical environment optimized to promote and accelerate protein folding. GroES binds to the apical surface of the GroEL ring, thereby capping the opening of the GroEL channel. This Baumannia cicadellinicola subsp. Homalodisca coagulata protein is Co-chaperonin GroES.